Consider the following 316-residue polypeptide: MIKLGIVMDPISSINIKKDSSFAMMLEAQRRGYEIHYMEMNDLHLDQGKAIADTKVVELKEDPNGWYEFKSEQMIELSELDAVLMRKDPPFDTEYIYATYILERAEEQGALIVNKPQSLRDCNEKLFTAWFPELTPTTIVTRKAEKIKAFREEHGDVILKPLDGMGGASIFRVKENDPNVSVIIETLTNHGQNYAMAQTFVPDISNGDKRILVVDGEPMPYCLARIPAKGETRGNLAAGGTGEARPLSETDMKIAQAVAPTLKEKGLIFVGLDVIGDKLTEINVTSPTCIREIEAAFDISITGKLMDAIERRVKGE.

Residues 124 to 310 (EKLFTAWFPE…ITGKLMDAIE (187 aa)) enclose the ATP-grasp domain. Position 150-207 (150-207 (FREEHGDVILKPLDGMGGASIFRVKENDPNVSVIIETLTNHGQNYAMAQTFVPDISNG)) interacts with ATP. The Mg(2+) site is built by Glu-281 and Asn-283.

It belongs to the prokaryotic GSH synthase family. The cofactor is Mg(2+). Mn(2+) serves as cofactor.

The catalysed reaction is gamma-L-glutamyl-L-cysteine + glycine + ATP = glutathione + ADP + phosphate + H(+). Its pathway is sulfur metabolism; glutathione biosynthesis; glutathione from L-cysteine and L-glutamate: step 2/2. In Vibrio parahaemolyticus serotype O3:K6 (strain RIMD 2210633), this protein is Glutathione synthetase.